A 415-amino-acid chain; its full sequence is Transcription termination factor Rho (415 aa).

Residues 52–119 form the Rho RNA-BD domain; that stretch reads ADIASGVLDI…TDVVRVNGRT (68 aa). ATP contacts are provided by residues 161–166, 173–178, and arginine 204; these read GKGQRG and KTGKTV.

It belongs to the Rho family. As to quaternary structure, homohexamer. The homohexamer assembles into an open ring structure.

Its function is as follows. Facilitates transcription termination by a mechanism that involves Rho binding to the nascent RNA, activation of Rho's RNA-dependent ATPase activity, and release of the mRNA from the DNA template. The sequence is that of Transcription termination factor Rho from Streptomyces coelicolor (strain ATCC BAA-471 / A3(2) / M145).